The sequence spans 247 residues: tRNA pseudouridine synthase A (247 aa).

D58 functions as the Nucleophile in the catalytic mechanism. Y116 contributes to the substrate binding site.

It belongs to the tRNA pseudouridine synthase TruA family. Homodimer.

The enzyme catalyses uridine(38/39/40) in tRNA = pseudouridine(38/39/40) in tRNA. Functionally, formation of pseudouridine at positions 38, 39 and 40 in the anticodon stem and loop of transfer RNAs. In Hydrogenobaculum sp. (strain Y04AAS1), this protein is tRNA pseudouridine synthase A.